Consider the following 296-residue polypeptide: Tyrosine recombinase XerC (296 aa).

The Core-binding (CB) domain occupies 1–84 (MDKIQETFLY…TLRTFYEFWM (84 aa)). The Tyr recombinase domain occupies 105 to 286 (YLPQFFYEEE…SNQQLRKVYL (182 aa)). Active-site residues include R145, K169, H238, R241, and H264. The O-(3'-phospho-DNA)-tyrosine intermediate role is filled by Y273.

Belongs to the 'phage' integrase family. XerC subfamily. Forms a cyclic heterotetrameric complex composed of two molecules of XerC and two molecules of XerD.

The protein resides in the cytoplasm. Its function is as follows. Site-specific tyrosine recombinase, which acts by catalyzing the cutting and rejoining of the recombining DNA molecules. The XerC-XerD complex is essential to convert dimers of the bacterial chromosome into monomers to permit their segregation at cell division. It also contributes to the segregational stability of plasmids. This chain is Tyrosine recombinase XerC, found in Staphylococcus epidermidis (strain ATCC 35984 / DSM 28319 / BCRC 17069 / CCUG 31568 / BM 3577 / RP62A).